Consider the following 382-residue polypeptide: UDP-N-acetylenolpyruvoylglucosamine reductase (382 aa).

Residues 50-253 (RVGGPAVLAE…REAVLRLRAS (204 aa)) form the FAD-binding PCMH-type domain. Arg193 is a catalytic residue. Ser270 (proton donor) is an active-site residue. Residue Glu374 is part of the active site.

This sequence belongs to the MurB family. FAD serves as cofactor.

The protein localises to the cytoplasm. The catalysed reaction is UDP-N-acetyl-alpha-D-muramate + NADP(+) = UDP-N-acetyl-3-O-(1-carboxyvinyl)-alpha-D-glucosamine + NADPH + H(+). It participates in cell wall biogenesis; peptidoglycan biosynthesis. Its function is as follows. Cell wall formation. The polypeptide is UDP-N-acetylenolpyruvoylglucosamine reductase (Nocardia farcinica (strain IFM 10152)).